The following is a 197-amino-acid chain: Peptidyl-tRNA hydrolase (197 aa).

Residue Tyr18 participates in tRNA binding. The Proton acceptor role is filled by His23. Phe69, Asn71, and Asn117 together coordinate tRNA.

The protein belongs to the PTH family. As to quaternary structure, monomer.

The protein resides in the cytoplasm. It carries out the reaction an N-acyl-L-alpha-aminoacyl-tRNA + H2O = an N-acyl-L-amino acid + a tRNA + H(+). Hydrolyzes ribosome-free peptidyl-tRNAs (with 1 or more amino acids incorporated), which drop off the ribosome during protein synthesis, or as a result of ribosome stalling. Its function is as follows. Catalyzes the release of premature peptidyl moieties from peptidyl-tRNA molecules trapped in stalled 50S ribosomal subunits, and thus maintains levels of free tRNAs and 50S ribosomes. The protein is Peptidyl-tRNA hydrolase of Psychromonas ingrahamii (strain DSM 17664 / CCUG 51855 / 37).